Here is a 675-residue protein sequence, read N- to C-terminus: uncharacterized protein (675 aa).

Helical transmembrane passes span 2–22 (QHTFIYDTCLWILSILIDFFF), 397–417 (LFLLALGALPGAILFSPVFIA), 448–468 (LLVALGMTPILYSFYALLCCY), and 481–501 (IFVYTVPIISTFLFPMVTYAA). Disordered stretches follow at residues 616–635 (YSPNPSALPPSDEEEKDIND) and 646–675 (QRMGQRMTEIRSRDTPPEEVFSESDEELSD). The segment covering 665–675 (VFSESDEELSD) has biased composition (acidic residues). Serine 669 is modified (phosphoserine).

It belongs to the 1-acyl-sn-glycerol-3-phosphate acyltransferase family.

It is found in the endoplasmic reticulum membrane. This is an uncharacterized protein from Schizosaccharomyces pombe (strain 972 / ATCC 24843) (Fission yeast).